Consider the following 478-residue polypeptide: Ketoisovalerate oxidoreductase subunit VorA (478 aa).

As to quaternary structure, heterotrimer of the VorA, VorB and VorC subunits.

This is Ketoisovalerate oxidoreductase subunit VorA (vorA) from Methanothermobacter marburgensis (strain ATCC BAA-927 / DSM 2133 / JCM 14651 / NBRC 100331 / OCM 82 / Marburg) (Methanobacterium thermoautotrophicum).